The primary structure comprises 556 residues: Potassium-transporting ATPase potassium-binding subunit (556 aa).

Transmembrane regions (helical) follow at residues 6-26, 65-85, 133-153, 176-196, 249-269, 283-303, 378-398, 419-439, 483-503, and 526-546; these read AGLI…VPLG, GVLA…LVQG, GLAV…VALV, LRIL…GGAI, PTAW…FSLP, YAIA…MLWF, GLYG…LMVG, YFLV…ALPG, ALGL…LALA, and FVGM…LPML.

This sequence belongs to the KdpA family. The system is composed of three essential subunits: KdpA, KdpB and KdpC.

The protein localises to the cell membrane. In terms of biological role, part of the high-affinity ATP-driven potassium transport (or Kdp) system, which catalyzes the hydrolysis of ATP coupled with the electrogenic transport of potassium into the cytoplasm. This subunit binds the extracellular potassium ions and delivers the ions to the membrane domain of KdpB through an intramembrane tunnel. The polypeptide is Potassium-transporting ATPase potassium-binding subunit (Mycolicibacterium paratuberculosis (strain ATCC BAA-968 / K-10) (Mycobacterium paratuberculosis)).